The chain runs to 320 residues: Solute carrier family 25 member 33 (320 aa).

3 Solcar repeats span residues 9–118 (ENTL…AKEQ), 126–213 (NSNT…LKKC), and 231–315 (SGFF…IVYL). The next 6 helical transmembrane spans lie at 12 to 32 (LLHLFAGGCGGTVGAIFTCPL), 49 to 65 (VYYPQVHLGTISGAGMV), 121 to 141 (GIFVPNSNTVHILSAGSAAFV), 190 to 210 (LTASYAGISETIICFAIYESL), 233 to 253 (FFGLMAAAAVSKGCASCIAYP), and 298 to 318 (QIPNTAIVLSTYEFIVYLLGE).

It belongs to the mitochondrial carrier (TC 2.A.29) family.

Its subcellular location is the mitochondrion inner membrane. It catalyses the reaction UTP(in) + UDP(out) = UTP(out) + UDP(in). The catalysed reaction is dUTP(out) + UTP(in) = dUTP(in) + UTP(out). It carries out the reaction 5-methyl-UTP(out) + UTP(in) = 5-methyl-UTP(in) + UTP(out). The enzyme catalyses 5-methyl-UDP(out) + UTP(in) = 5-methyl-UDP(in) + UTP(out). It catalyses the reaction UTP(in) + CTP(out) = UTP(out) + CTP(in). The catalysed reaction is CDP(out) + UTP(in) = CDP(in) + UTP(out). It carries out the reaction dCTP(out) + UTP(in) = dCTP(in) + UTP(out). The enzyme catalyses dCDP(out) + UTP(in) = dCDP(in) + UTP(out). It catalyses the reaction UTP(in) + GTP(out) = UTP(out) + GTP(in). The catalysed reaction is UTP(in) + GDP(out) = UTP(out) + GDP(in). It carries out the reaction dGTP(out) + UTP(in) = dGTP(in) + UTP(out). The enzyme catalyses dGDP(out) + UTP(in) = dGDP(in) + UTP(out). It catalyses the reaction ITP(out) + UTP(in) = ITP(in) + UTP(out). In terms of biological role, mitochondrial transporter that imports/exports pyrimidine nucleotides into and from mitochondria. Selectively transports uridine, thymidine, guanosine, cytosine and inosine (deoxy)nucleoside di- and triphosphates by an antiport mechanism. May import (deoxy)nucleoside triphosphates in exchange for intramitochondrial (deoxy)nucleoside diphosphates, thus providing precursors necessary for de novo synthesis of mitochondrial DNA and RNA while exporting products of their catabolism. Participates in mitochondrial genome maintenance, regulation of mitochondrial membrane potential and mitochondrial respiration. Upon INS or IGF1 stimulation regulates cell growth and proliferation by controlling mitochondrial DNA replication and transcription, the ratio of mitochondria-to nuclear-encoded components of the electron transport chain resulting in control of mitochondrial ROS production. Participates in dendritic cell endocytosis and may associate with mitochondrial oxidative phosphorylation. This is Solute carrier family 25 member 33 (Slc25a33) from Mus musculus (Mouse).